The primary structure comprises 60 residues: Cytotoxin 1 (60 aa).

4 cysteine pairs are disulfide-bonded: cysteine 3–cysteine 21, cysteine 14–cysteine 38, cysteine 42–cysteine 53, and cysteine 54–cysteine 59.

This sequence belongs to the three-finger toxin family. Short-chain subfamily. Type IA cytotoxin sub-subfamily. Monomer in solution; Homodimer and oligomer in the presence of negatively charged lipids forming a pore with a size ranging between 20 and 30 Angstroms. Expressed by the venom gland.

Its subcellular location is the secreted. It localises to the target cell membrane. Shows cytolytic activity on many different cells by forming pore in lipid membranes. In vivo, increases heart rate or kills the animal by cardiac arrest. In addition, it binds to heparin with high affinity, interacts with Kv channel-interacting protein 1 (KCNIP1) in a calcium-independent manner, and binds to integrin alpha-V/beta-3 (ITGAV/ITGB3) with moderate affinity. This Naja melanoleuca (Forest cobra) protein is Cytotoxin 1.